A 418-amino-acid polypeptide reads, in one-letter code: UPF0754 membrane protein alr5253 (418 aa).

A run of 2 helical transmembrane segments spans residues 10–30 (WSHL…GYFT) and 394–414 (IVSL…AFFI).

The protein belongs to the UPF0754 family.

It localises to the cell inner membrane. This is UPF0754 membrane protein alr5253 from Nostoc sp. (strain PCC 7120 / SAG 25.82 / UTEX 2576).